The primary structure comprises 116 residues: Large ribosomal subunit protein uL18 (116 aa).

This sequence belongs to the universal ribosomal protein uL18 family. In terms of assembly, part of the 50S ribosomal subunit; part of the 5S rRNA/L5/L18/L25 subcomplex. Contacts the 5S and 23S rRNAs.

Functionally, this is one of the proteins that bind and probably mediate the attachment of the 5S RNA into the large ribosomal subunit, where it forms part of the central protuberance. In Cellvibrio japonicus (strain Ueda107) (Pseudomonas fluorescens subsp. cellulosa), this protein is Large ribosomal subunit protein uL18.